A 257-amino-acid chain; its full sequence is Zinc transporter ZupT (257 aa).

The next 8 membrane-spanning stretches (helical) occupy residues 5–25, 33–53, 61–81, 109–129, 137–157, 171–191, 195–215, and 236–256; these read LILT…GVLG, LAFS…MEML, GMSP…YFGL, AILL…ATFV, LGFG…LAVA, IFWA…AWLI, LVSP…MVAL, and GVLC…TIGI. Residues Asn120 and Glu123 each contribute to the Fe(2+) site. Positions 123 and 148 each coordinate Zn(2+). Residues Asn149, Glu152, and Glu181 each coordinate Fe(2+). Glu152 lines the Zn(2+) pocket.

Belongs to the ZIP transporter (TC 2.A.5) family. ZupT subfamily.

Its subcellular location is the cell inner membrane. It carries out the reaction Zn(2+)(in) = Zn(2+)(out). Functionally, mediates zinc uptake. May also transport other divalent cations. This Salmonella paratyphi A (strain ATCC 9150 / SARB42) protein is Zinc transporter ZupT.